We begin with the raw amino-acid sequence, 358 residues long: COP9 signalosome complex subunit 5b (358 aa).

Position 1 is an N-acetylmethionine (Met1). Residues 59-196 enclose the MPN domain; that stretch reads VKISALALLK…IGAFRTYSKG (138 aa). Residues His142, His144, and Asp155 each contribute to the Zn(2+) site. The JAMM motif signature appears at 142 to 155; the sequence is HSHPGYGCWLSGID. Residues 338–349 show a composition bias toward polar residues; the sequence is MRQSNNKSPTDS. A disordered region spans residues 338–358; the sequence is MRQSNNKSPTDSSDPDPMITY.

It belongs to the peptidase M67A family. CSN5 subfamily. Component of the CSN complex, probably composed of CSN1, CSN2, CSN3, CSN4, CSN5 (CSN5A or CSN5B), CSN6 (CSN6A or CSN6B), CSN7 and CSN8. CSN5A or CSN5B are present within distinct CSN complexes each containing only one copy of CSN5. Interacts with itself. In the complex, it is located in the center and probably interacts directly with CSN4 and CSN6A or CSN6B. Also exists as monomeric form. Interacts with CYT1 in vitro and in planta. Interacts with FLZ3. A divalent metal cation is required as a cofactor. As to expression, ubiquitously expressed. Highly expressed in flowers and roots. Expressed at lower level in seedlings and siliques.

Its subcellular location is the cytoplasm. The protein localises to the nucleus. Probable protease subunit of the COP9 signalosome complex (CSN), a complex involved in various cellular and developmental processes such as photomorphogenesis and auxin and jasmonate responses. The CSN complex is an essential regulator of the ubiquitin (Ubl) conjugation pathway by mediating the deneddylation of the cullin subunits of the SCF-type E3 ligase complexes, leading to decrease the Ubl ligase activity of SCF. In the complex, it probably acts as the catalytic center that mediates the cleavage of Nedd8 from cullins. It however has no metalloprotease activity by itself and requires the other subunits of the CSN complex. The CSN complex is involved in repression of photomorphogenesis in darkness by regulating the activity of COP1-containing Ubl ligase complexes. The complex is also required for degradation of PSIAA6 by regulating the activity of the Ubl ligase SCF-TIR complex. Not involved in CSN's deneddylation/derubylation activity. Essential for the structural integrity of the CSN holocomplex. In Arabidopsis thaliana (Mouse-ear cress), this protein is COP9 signalosome complex subunit 5b.